The following is a 157-amino-acid chain: Lectin (157 aa).

The cysteines at positions 37 and 54 are disulfide-linked.

As to quaternary structure, homodimer. As to expression, detected in fruits (at protein level).

It is found in the secreted. Its function is as follows. Binds with high affinity specifically to chito-oligosaccharides. May play a role in plant defense against pathogens by directly binding with the chitin cell wall. Forms filamentous structures at higher concentrations and may promote wound healing by forming filaments with phloem proteins like PP1. The sequence is that of Lectin from Coccinia grandis (Ivy gourd).